Consider the following 605-residue polypeptide: Tyrosyl-DNA phosphodiesterase 1 (605 aa).

The short motif at 81 to 86 (RKKVKP) is the Nuclear localization signal element. Catalysis depends on H236, which acts as the Nucleophile. K238 serves as a coordination point for substrate. Residues 379 to 382 (SLGS) form an interaction with DNA region. The Proton donor/acceptor role is filled by H466. Residue K468 coordinates substrate.

Belongs to the tyrosyl-DNA phosphodiesterase family. Ubiquitous, with a low level in roots.

Its subcellular location is the nucleus. Inhibited by vanadate analogs. Its function is as follows. DNA repair enzyme that can remove a variety of covalent adducts from DNA through hydrolysis of a 3'-phosphodiester bond, giving rise to DNA with a free 3' phosphate. Catalyzes the hydrolysis of dead-end complexes between DNA and the topoisomerase I active site tyrosine residue. The sequence is that of Tyrosyl-DNA phosphodiesterase 1 from Arabidopsis thaliana (Mouse-ear cress).